A 245-amino-acid chain; its full sequence is Probable phosphatase YcdX (245 aa).

Zn(2+) is bound by residues H7, H9, H15, H40, E73, H101, H131, D192, and H194.

The protein belongs to the PHP family. In terms of assembly, homotrimer. It depends on Zn(2+) as a cofactor.

This is Probable phosphatase YcdX from Escherichia coli O81 (strain ED1a).